A 109-amino-acid polypeptide reads, in one-letter code: MINYLWFVLAAFCEIAGCYAFYLWLRLGKSALWVLPGLLSLTLFALLLTRVEASYAGRAYAAYGGIYVAASLFWLAFVERSRPLWSDWLGVALCVVGASVVLFGPRLSQ.

Transmembrane regions (helical) follow at residues 5–25 (LWFV…YLWL), 27–47 (LGKS…FALL), 59–79 (AYAA…AFVE), and 84–104 (LWSD…VLFG).

The protein belongs to the UPF0060 family.

It localises to the cell inner membrane. The polypeptide is UPF0060 membrane protein PA14_21660 (Pseudomonas aeruginosa (strain UCBPP-PA14)).